Reading from the N-terminus, the 318-residue chain is MKHLIISEYGIYLGLESGRLVVKNKDDKKYFPLNRLATLSIAKKGVSFSSDLVEQFSLRGIKLFFLDFRGVAHSMLVGANQHAVVQARINQYRYIDRNALTLSIKLIAAKIKNQRATLNYFNKHHKSINLLNAIEELKRVAQLIKNAKTLNDVLGYEGYAANIYFSSLAKDKFLSASFANREGRGSQEIANSMLNFGYAILSSYILNAITNAGLEPYLGFLHQKRPGKMSLVLDLMEEYRAWVVDRVVIKLREQYKNKQYIDTKLKSILISEIQATIAKKYIYNGKKLKLEHIIQRQVYRLSGEFAGEHNYKPYIFKW.

3 residues coordinate Mn(2+): E157, H222, and E237.

It belongs to the CRISPR-associated endonuclease Cas1 family. As to quaternary structure, homodimer, forms a heterotetramer with a Cas2 homodimer. The cofactor is Mg(2+). Requires Mn(2+) as cofactor.

Functionally, CRISPR (clustered regularly interspaced short palindromic repeat), is an adaptive immune system that provides protection against mobile genetic elements (viruses, transposable elements and conjugative plasmids). CRISPR clusters contain spacers, sequences complementary to antecedent mobile elements, and target invading nucleic acids. CRISPR clusters are transcribed and processed into CRISPR RNA (crRNA). Acts as a dsDNA endonuclease. Involved in the integration of spacer DNA into the CRISPR cassette. The polypeptide is CRISPR-associated endonuclease Cas1 1 (Francisella tularensis subsp. novicida (strain U112)).